Reading from the N-terminus, the 1058-residue chain is Ubiquitin-like modifier-activating enzyme 1 Y (1058 aa).

The interval 1–22 (MSSSVLSKKRKVSGPDSSLDSS) is disordered. ATP-binding positions include Ala477, Asp503, Arg514, Lys527, and 575 to 576 (DN). The Glycyl thioester intermediate role is filled by Cys631.

This sequence belongs to the ubiquitin-activating E1 family. As to quaternary structure, monomer. In terms of tissue distribution, expressed in testis in A spermatogonia and spermatids but not (or at very low levels) in pachytene spermatocytes. Also expressed in Y-bearing ovaries and at very low levels in adrenal gland.

The enzyme catalyses ATP + ubiquitin + [E1 ubiquitin-activating enzyme]-L-cysteine = AMP + diphosphate + S-ubiquitinyl-[E1 ubiquitin-activating enzyme]-L-cysteine.. Its pathway is protein modification; protein ubiquitination. Functionally, activates ubiquitin by first adenylating its C-terminal glycine residue with ATP, and thereafter linking this residue to the side chain of a cysteine residue in E1, yielding a ubiquitin-E1 thioester and free AMP. The Y chromosome form could be involved in the survival and proliferation of differentiating spermatogonia. The sequence is that of Ubiquitin-like modifier-activating enzyme 1 Y (Uba1y) from Mus musculus (Mouse).